We begin with the raw amino-acid sequence, 359 residues long: Outer membrane protein A (359 aa).

The signal sequence occupies residues 1–21 (MKKTAIALAVALAGFATVAQA). A run of 8 beta stranded transmembrane segments spans residues 27 to 37 (TWYTGAKLGWS), 62 to 73 (QLGAGAFLGYQA), 77 to 85 (LGFELGYDW), 103 to 114 (QGVQLAAKLSYP), 119 to 127 (LDIYTRLGG), 154 to 163 (PLAAVGVEYA), 168 to 175 (WATRLDYQ), and 194 to 202 (MLSLGVSYR). Tandem repeats lie at residues 210–211 (AP), 212–213 (AP), 214–215 (AP), 216–217 (AP), and 218–219 (AP). A 5 X 2 AA tandem repeats of A-P region spans residues 210–219 (APAPAPAPAP). One can recognise an OmpA-like domain in the interval 221-351 (VETKRFTLKS…RVEIEVKGIK (131 aa)). The cysteines at positions 322 and 336 are disulfide-linked.

This sequence belongs to the outer membrane OOP (TC 1.B.6) superfamily. OmpA family. As to quaternary structure, monomer and homodimer.

It is found in the cell outer membrane. Its function is as follows. With TolR probably plays a role in maintaining the position of the peptidoglycan cell wall in the periplasm. Acts as a porin with low permeability that allows slow penetration of small solutes; an internal gate slows down solute passage. The polypeptide is Outer membrane protein A (Serratia marcescens).